The primary structure comprises 158 residues: Pathogenesis-related protein 2 (158 aa).

The protein belongs to the BetVI family.

In Petroselinum crispum (Parsley), this protein is Pathogenesis-related protein 2 (PR2).